The primary structure comprises 129 residues: ATP synthase epsilon chain (129 aa).

It belongs to the ATPase epsilon chain family. In terms of assembly, F-type ATPases have 2 components, CF(1) - the catalytic core - and CF(0) - the membrane proton channel. CF(1) has five subunits: alpha(3), beta(3), gamma(1), delta(1), epsilon(1). CF(0) has three main subunits: a, b and c.

Its subcellular location is the cell inner membrane. Produces ATP from ADP in the presence of a proton gradient across the membrane. This is ATP synthase epsilon chain from Campylobacter jejuni subsp. doylei (strain ATCC BAA-1458 / RM4099 / 269.97).